The primary structure comprises 97 residues: uncharacterized protein (97 aa).

Disordered stretches follow at residues 1 to 20 and 52 to 97; these read MTEG…IASD and VPAA…GRRA.

This is an uncharacterized protein from Paracoccus pantotrophus (Thiosphaera pantotropha).